Reading from the N-terminus, the 251-residue chain is Ubiquinone/menaquinone biosynthesis C-methyltransferase UbiE (251 aa).

Residues Thr74, Asp95, and 123–124 contribute to the S-adenosyl-L-methionine site; that span reads NA.

The protein belongs to the class I-like SAM-binding methyltransferase superfamily. MenG/UbiE family.

It catalyses the reaction a 2-demethylmenaquinol + S-adenosyl-L-methionine = a menaquinol + S-adenosyl-L-homocysteine + H(+). The catalysed reaction is a 2-methoxy-6-(all-trans-polyprenyl)benzene-1,4-diol + S-adenosyl-L-methionine = a 5-methoxy-2-methyl-3-(all-trans-polyprenyl)benzene-1,4-diol + S-adenosyl-L-homocysteine + H(+). The protein operates within quinol/quinone metabolism; menaquinone biosynthesis; menaquinol from 1,4-dihydroxy-2-naphthoate: step 2/2. It participates in cofactor biosynthesis; ubiquinone biosynthesis. Methyltransferase required for the conversion of demethylmenaquinol (DMKH2) to menaquinol (MKH2) and the conversion of 2-polyprenyl-6-methoxy-1,4-benzoquinol (DDMQH2) to 2-polyprenyl-3-methyl-6-methoxy-1,4-benzoquinol (DMQH2). The sequence is that of Ubiquinone/menaquinone biosynthesis C-methyltransferase UbiE from Edwardsiella ictaluri (strain 93-146).